The chain runs to 511 residues: GMP synthase [glutamine-hydrolyzing] (511 aa).

Residues 5–195 (DIIVLDFGSQ…AKYICDCEST (191 aa)) enclose the Glutamine amidotransferase type-1 domain. C82 acts as the Nucleophile in catalysis. Residues H169 and E171 contribute to the active site. The region spanning 196–386 (WNMGNFAKIK…LGLSPDLVYR (191 aa)) is the GMPS ATP-PPase domain. Residue 223-229 (SGGVDSS) participates in ATP binding.

As to quaternary structure, homodimer.

It carries out the reaction XMP + L-glutamine + ATP + H2O = GMP + L-glutamate + AMP + diphosphate + 2 H(+). The protein operates within purine metabolism; GMP biosynthesis; GMP from XMP (L-Gln route): step 1/1. In terms of biological role, catalyzes the synthesis of GMP from XMP. This is GMP synthase [glutamine-hydrolyzing] from Campylobacter hominis (strain ATCC BAA-381 / DSM 21671 / CCUG 45161 / LMG 19568 / NCTC 13146 / CH001A).